Here is a 478-residue protein sequence, read N- to C-terminus: Methionine aminopeptidase 2 (478 aa).

The tract at residues 1-122 (MAGVEEVAAS…TDPPSVPICD (122 aa)) is disordered. N-acetylalanine is present on alanine 2. Over residues 36–46 (KKKRRKKKKSK) the composition is skewed to basic residues. Residue serine 45 is modified to Phosphoserine. Over residues 55 to 79 (EPDKESGASVDEVARQLERSALEDK) the composition is skewed to basic and acidic residues. Serine 60 and serine 63 each carry phosphoserine; alternate. O-linked (GlcNAc) serine; alternate glycosylation is found at serine 60 and serine 63. A Phosphoserine modification is found at serine 74. Acidic residues predominate over residues 80-92 (ERDEDDEDGDGDG). Residues 97–109 (GKKKKKKKKKRGP) are compositionally biased toward basic residues. Residue histidine 231 participates in substrate binding. Aspartate 251, aspartate 262, and histidine 331 together coordinate a divalent metal cation. Histidine 339 contributes to the substrate binding site. Glutamate 364 and glutamate 459 together coordinate a divalent metal cation.

It belongs to the peptidase M24A family. Methionine aminopeptidase eukaryotic type 2 subfamily. As to quaternary structure, interacts strongly with the eIF-2 gamma-subunit EIF2S3. Binds EIF2S1 at low magnesium concentrations. The cofactor is Co(2+). Zn(2+) is required as a cofactor. Requires Mn(2+) as cofactor. Fe(2+) serves as cofactor. Post-translationally, contains approximately 12 O-linked N-acetylglucosamine (GlcNAc) residues. O-glycosylation is required for EIF2S1 binding.

The protein resides in the cytoplasm. The catalysed reaction is Release of N-terminal amino acids, preferentially methionine, from peptides and arylamides.. In terms of biological role, cotranslationally removes the N-terminal methionine from nascent proteins. The N-terminal methionine is often cleaved when the second residue in the primary sequence is small and uncharged (Met-Ala-, Cys, Gly, Pro, Ser, Thr, or Val). The catalytic activity of human METAP2 toward Met-Val peptides is consistently two orders of magnitude higher than that of METAP1, suggesting that it is responsible for processing proteins containing N-terminal Met-Val and Met-Thr sequences in vivo. Functionally, protects eukaryotic initiation factor EIF2S1 from translation-inhibiting phosphorylation by inhibitory kinases such as EIF2AK2/PKR and EIF2AK1/HCR. Plays a critical role in the regulation of protein synthesis. This Homo sapiens (Human) protein is Methionine aminopeptidase 2.